We begin with the raw amino-acid sequence, 160 residues long: Invasion protein IagB (160 aa).

The N-terminal stretch at M1 to A19 is a signal peptide.

The protein belongs to the IagB/IpgF/P19 family.

This is Invasion protein IagB (iagB) from Salmonella typhi.